A 229-amino-acid polypeptide reads, in one-letter code: 2,3-bisphosphoglycerate-dependent phosphoglycerate mutase (229 aa).

Substrate is bound by residues 7–14 (RHGQSEWN), 20–21 (TG), Arg59, 86–89 (ERHY), Lys97, 113–114 (RR), and 182–183 (GN). His8 (tele-phosphohistidine intermediate) is an active-site residue. Residue Glu86 is the Proton donor/acceptor of the active site.

The protein belongs to the phosphoglycerate mutase family. BPG-dependent PGAM subfamily.

It catalyses the reaction (2R)-2-phosphoglycerate = (2R)-3-phosphoglycerate. Its pathway is carbohydrate degradation; glycolysis; pyruvate from D-glyceraldehyde 3-phosphate: step 3/5. In terms of biological role, catalyzes the interconversion of 2-phosphoglycerate and 3-phosphoglycerate. The polypeptide is 2,3-bisphosphoglycerate-dependent phosphoglycerate mutase (Listeria monocytogenes serovar 1/2a (strain ATCC BAA-679 / EGD-e)).